Consider the following 295-residue polypeptide: Phosphoribosylaminoimidazole-succinocarboxamide synthase (295 aa).

It belongs to the SAICAR synthetase family.

The enzyme catalyses 5-amino-1-(5-phospho-D-ribosyl)imidazole-4-carboxylate + L-aspartate + ATP = (2S)-2-[5-amino-1-(5-phospho-beta-D-ribosyl)imidazole-4-carboxamido]succinate + ADP + phosphate + 2 H(+). The protein operates within purine metabolism; IMP biosynthesis via de novo pathway; 5-amino-1-(5-phospho-D-ribosyl)imidazole-4-carboxamide from 5-amino-1-(5-phospho-D-ribosyl)imidazole-4-carboxylate: step 1/2. The polypeptide is Phosphoribosylaminoimidazole-succinocarboxamide synthase (Corynebacterium ammoniagenes (Brevibacterium ammoniagenes)).